A 428-amino-acid polypeptide reads, in one-letter code: Somatostatin receptor type 3 (428 aa).

The Extracellular portion of the chain corresponds to 1 to 45; sequence MAAVTYPSSVPTTLDPGNASSAWPLDTSLGNASAGTSLAGLAVSG. 2 N-linked (GlcNAc...) asparagine glycosylation sites follow: asparagine 18 and asparagine 31. The chain crosses the membrane as a helical span at residues 46–71; that stretch reads ILISLVYLVVCVVGLLGNSLVIYVVL. Residues 72 to 81 lie on the Cytoplasmic side of the membrane; that stretch reads RHTSSPSVTS. A helical membrane pass occupies residues 82-103; sequence VYILNLALADELFMLGLPFLAA. The Extracellular portion of the chain corresponds to 104–118; it reads QNALSYWPFGSLMCR. The cysteines at positions 117 and 192 are disulfide-linked. Residues 119 to 140 form a helical membrane-spanning segment; the sequence is LVMAVDGINQFTSIFCLTVMSV. Residues 141-162 lie on the Cytoplasmic side of the membrane; it reads DRYLAVVHPTRSARWRTAPVAR. The chain crosses the membrane as a helical span at residues 163–182; the sequence is MVSAAVWVASAVVVLPVVVF. Over 183–206 the chain is Extracellular; the sequence is SGVPRGMSTCHMQWPEPAAAWRTA. The chain crosses the membrane as a helical span at residues 207 to 232; the sequence is FIIYTAALGFFGPLLVICLCYLLIVV. Topologically, residues 233–266 are cytoplasmic; it reads KVRSTTRRVRAPSCQWVQAPACQRRRRSERRVTR. Residues 267–288 traverse the membrane as a helical segment; it reads MVVAVVALFVLCWMPFYLLNIV. At 289–302 the chain is on the extracellular side; that stretch reads NVVCPLPEEPAFFG. A helical transmembrane segment spans residues 303-325; that stretch reads LYFLVVALPYANSCANPILYGFL. The Cytoplasmic portion of the chain corresponds to 326–428; it reads SYRFKQGFRR…GDKASTLSHL (103 aa). 3 positions are modified to phosphoserine: serine 341, serine 346, and serine 351. The tract at residues 343 to 428 is disordered; sequence RVRSQEPGSG…GDKASTLSHL (86 aa). At threonine 357 the chain carries Phosphothreonine. Residues 357–370 show a composition bias toward acidic residues; it reads TEEEEDEEEEERRE. Residues 385-412 are compositionally biased toward polar residues; that stretch reads RLSQIAQPGPSGQQQRPCTGTAKEQQLL.

This sequence belongs to the G-protein coupled receptor 1 family. Homodimer and heterodimer with SSTR2. Heterodimerization with SSTR2 inactivates SSTR3 receptor function. In terms of processing, phosphorylated. Phosphorylation increases upon somatostatin binding. Densely expressed in cerebellum and at moderate levels in the amygdala, cortex, striatum, spleen, liver and pituitary.

It localises to the cell membrane. Receptor for somatostatin-14 and -28. This receptor is coupled via pertussis toxin sensitive G proteins to inhibition of adenylyl cyclase. In Rattus norvegicus (Rat), this protein is Somatostatin receptor type 3 (Sstr3).